The chain runs to 279 residues: Movement protein (279 aa).

Residues 256–266 are compositionally biased toward low complexity; sequence PPIAIGSPSAS. Positions 256–279 are disordered; the sequence is PPIAIGSPSASRNNSFRSQVVNGL. Over residues 267–279 the composition is skewed to polar residues; it reads RNNSFRSQVVNGL.

This sequence belongs to the cucumovirus movement protein family.

Its subcellular location is the host cell junction. It is found in the host plasmodesma. Transports viral genome to neighboring plant cells directly through plasmosdesmata, without any budding. The movement protein allows efficient cell to cell propagation, by bypassing the host cell wall barrier. Acts by forming a tubular structure at the host plasmodesmata, enlarging it enough to allow free passage of virion capsids. This is Movement protein from Cucumis sativus (Cucumber).